The chain runs to 425 residues: Putative nucleoside transporter YegT (425 aa).

The Periplasmic segment spans residues 1-8 (MKTTAKLS). The helical transmembrane segment at 9 to 29 (FMMFVEWFIWGAWFVPLWLWL) threads the bilayer. The Cytoplasmic segment spans residues 30 to 38 (SKSGFSAGE). A helical membrane pass occupies residues 39 to 59 (IGWSYACTAIAAILSPILVGS). At 60–63 (ITDR) the chain is on the periplasmic side. A helical transmembrane segment spans residues 64–84 (FFSAQKVLAVLMFAGALLMYF). The Cytoplasmic segment spans residues 85-90 (AAQQTT). Residues 91 to 111 (FAGFFPLLLAYSLTYMPTIAL) form a helical membrane-spanning segment. The Periplasmic portion of the chain corresponds to 112–131 (TNSIAFANVPDVERDFPRIR). A helical membrane pass occupies residues 132-152 (VMGTIGWIASGLACGFLPQIL). The Cytoplasmic portion of the chain corresponds to 153-161 (GYADISPTN). A helical membrane pass occupies residues 162–182 (IPLLITAGSSALLGVFAFFLP). The Periplasmic segment spans residues 183 to 210 (DTPPKSTGKMDIKVMLGLDALILLRDKN). A helical transmembrane segment spans residues 211–231 (FLVFFFCSFLFAMPLAFYYIF). Residues 232 to 244 (ANGYLTEVGMKNA) are Cytoplasmic-facing. Residues 245-265 (TGWMTLGQFSEIFFMLALPFF) traverse the membrane as a helical segment. Topologically, residues 266 to 287 (TKRFGIKKVLLLGLVTAAIRYG) are periplasmic. A helical membrane pass occupies residues 288–308 (FFIYGSADEYFTYALLFLGIL). Over 309–339 (LHGVSYDFYYVTAYIYVDKKAPVHMRTAAQG) the chain is Cytoplasmic. Residues 340-360 (LITLCCQGFGSLLGYRLGGVM) traverse the membrane as a helical segment. The Periplasmic portion of the chain corresponds to 361 to 379 (MEKMFAYQEPVNGLTFNWS). Residues 380-400 (GMWTFGAVMIAIIAVLFMIFF) traverse the membrane as a helical segment. The Cytoplasmic segment spans residues 401–425 (RESDNEITAIKVDDRDIALTQGEVK).

Belongs to the major facilitator superfamily. Nucleoside:H(+) symporter (NHS) (TC 2.A.1.10) family.

The protein resides in the cell inner membrane. Its function is as follows. Could be involved in nucleoside transport. This Escherichia coli (strain K12) protein is Putative nucleoside transporter YegT (yegT).